Here is a 1186-residue protein sequence, read N- to C-terminus: Pumilio homolog 1 (1186 aa).

Ser2 carries the N-acetylserine modification. Phosphoserine is present on Ser19. Residues Leu22–Gly73 are disordered. Residues Gln45 to Ala58 show a composition bias toward low complexity. Residues Ser75, Ser98, and Ser106 each carry the phosphoserine modification. Thr112 is modified (phosphothreonine). 5 positions are modified to phosphoserine: Ser124, Ser159, Ser197, Ser209, and Ser229. The segment at Ser233 to Glu272 is disordered. The span at Asn250–Glu272 shows a compositional bias: basic and acidic residues. Phosphoserine is present on Ser305. The span at Thr485 to Gln502 shows a compositional bias: low complexity. Disordered stretches follow at residues Thr485–Thr524 and Ala613–Asn648. A compositionally biased stretch (polar residues) spans Arg511–Thr524. Thr514 carries the post-translational modification Phosphothreonine. The span at Gln626–Asn639 shows a compositional bias: low complexity. Phosphoserine is present on residues Ser709 and Ser714. A disordered region spans residues Gly742–Gly775. Over residues Leu763–Gly775 the composition is skewed to low complexity. Arg796 is subject to Omega-N-methylarginine. Phosphoserine is present on residues Ser806 and Ser822. The region spanning Gly828–Tyr1168 is the PUM-HD domain. 8 Pumilio repeats span residues Glu848–Asn883, Glu884–Glu919, Arg920–Arg955, Glu956–Asp991, Ala992–Glu1027, Glu1028–Ala1063, Glu1064–Asp1099, and Thr1103–His1142. The adenine-nucleotide binding in RNA target stretch occupies residues Ser863–Gln867. The tract at residues Asn899 to Gln903 is uracil-nucleotide binding in RNA target. Residues Cys935–Gln939 form an adenine-nucleotide binding in RNA target region. Residues Asn971 to Gln975 are non-specific-nucleotide binding in RNA target. Residues Cys1007–Gln1011 are adenine-nucleotide binding in RNA target. Residues Asn1043 to Gln1047 form a uracil-nucleotide binding in RNA target region. 2 guanine-nucleotide binding in RNA target regions span residues Ser1079–Glu1083 and Asn1080–Glu1083. The tract at residues Asn1122–Gln1126 is uracil-nucleotide binding in RNA target.

In terms of assembly, recruits the CCR4-POP2-NOT deadenylase leading to translational inhibition and mRNA degradation. Interacts with TRIM71 (via NHL repeats) in an RNA-dependent manner. In terms of processing, phosphorylation at Ser-714 promotes RNA-binding activity. Following growth factor stimulation phosphorylated at Ser-714, promoting binding to the 3'-UTR of CDKN1B/p27 mRNA.

The protein localises to the cytoplasm. It localises to the P-body. It is found in the cytoplasmic granule. Its function is as follows. Sequence-specific RNA-binding protein that acts as a post-transcriptional repressor by binding the 3'-UTR of mRNA targets. Binds to an RNA consensus sequence, the Pumilio Response Element (PRE), 5'-UGUANAUA-3', that is related to the Nanos Response Element (NRE). Mediates post-transcriptional repression of transcripts via different mechanisms: acts via direct recruitment of the CCR4-POP2-NOT deadenylase leading to translational inhibition and mRNA degradation. Also mediates deadenylation-independent repression by promoting accessibility of miRNAs. Following growth factor stimulation, phosphorylated and binds to the 3'-UTR of CDKN1B/p27 mRNA, inducing a local conformational change that exposes miRNA-binding sites, promoting association of miR-221 and miR-222, efficient suppression of CDKN1B/p27 expression, and rapid entry to the cell cycle. Acts as a post-transcriptional repressor of E2F3 mRNAs by binding to its 3'-UTR and facilitating miRNA regulation. Represses a program of genes necessary to maintain genomic stability such as key mitotic, DNA repair and DNA replication factors. Its ability to repress those target mRNAs is regulated by the lncRNA NORAD (non-coding RNA activated by DNA damage) which, due to its high abundance and multitude of PUMILIO binding sites, is able to sequester a significant fraction of PUM1 and PUM2 in the cytoplasm. Involved in neuronal functions by regulating ATXN1 mRNA levels: acts by binding to the 3'-UTR of ATXN1 transcripts, leading to their down-regulation independently of the miRNA machinery. Plays a role in cytoplasmic sensing of viral infection. In testis, acts as a post-transcriptional regulator of spermatogenesis by binding to the 3'-UTR of mRNAs coding for regulators of p53/TP53. Involved in embryonic stem cell renewal by facilitating the exit from the ground state: acts by targeting mRNAs coding for naive pluripotency transcription factors and accelerates their down-regulation at the onset of differentiation. Binds specifically to miRNA MIR199A precursor, with PUM2, regulates miRNA MIR199A expression at a postranscriptional level. The chain is Pumilio homolog 1 (PUM1) from Pongo abelii (Sumatran orangutan).